The chain runs to 540 residues: Chaperonin GroEL (540 aa).

ATP is bound by residues 29–32, 86–90, glycine 413, 476–478, and aspartate 492; these read TLGP, DGTTT, and NAA.

It belongs to the chaperonin (HSP60) family. In terms of assembly, forms a cylinder of 14 subunits composed of two heptameric rings stacked back-to-back. Interacts with the co-chaperonin GroES.

The protein resides in the cytoplasm. It carries out the reaction ATP + H2O + a folded polypeptide = ADP + phosphate + an unfolded polypeptide.. Functionally, together with its co-chaperonin GroES, plays an essential role in assisting protein folding. The GroEL-GroES system forms a nano-cage that allows encapsulation of the non-native substrate proteins and provides a physical environment optimized to promote and accelerate protein folding. This Geobacillus thermodenitrificans (strain NG80-2) protein is Chaperonin GroEL.